Reading from the N-terminus, the 253-residue chain is Tryptophan synthase alpha chain (253 aa).

Residues Glu-47 and Asp-58 each act as proton acceptor in the active site.

Belongs to the TrpA family. Tetramer of two alpha and two beta chains.

The catalysed reaction is (1S,2R)-1-C-(indol-3-yl)glycerol 3-phosphate + L-serine = D-glyceraldehyde 3-phosphate + L-tryptophan + H2O. It functions in the pathway amino-acid biosynthesis; L-tryptophan biosynthesis; L-tryptophan from chorismate: step 5/5. In terms of biological role, the alpha subunit is responsible for the aldol cleavage of indoleglycerol phosphate to indole and glyceraldehyde 3-phosphate. The sequence is that of Tryptophan synthase alpha chain from Lactococcus lactis subsp. cremoris (strain SK11).